The chain runs to 241 residues: Probable GTP-binding protein EngB (241 aa).

Residues 56-240 (GPVEIAFAGR…RAAIALLLKE (185 aa)) enclose the EngB-type G domain. GTP-binding positions include 64–71 (GRSNVGKS), 91–95 (GRTQE), 118–121 (DMPG), 185–188 (TKID), and 219–221 (TSS). Mg(2+) contacts are provided by Ser71 and Thr93.

It belongs to the TRAFAC class TrmE-Era-EngA-EngB-Septin-like GTPase superfamily. EngB GTPase family. Mg(2+) is required as a cofactor.

Necessary for normal cell division and for the maintenance of normal septation. The chain is Probable GTP-binding protein EngB from Brucella suis biovar 1 (strain 1330).